A 232-amino-acid chain; its full sequence is 5'-methylthioadenosine/S-adenosylhomocysteine nucleosidase (232 aa).

Glu14 acts as the Proton acceptor in catalysis. Substrate-binding positions include Gly80, Val154, and 175-176 (ME). Asp199 serves as the catalytic Proton donor.

It belongs to the PNP/UDP phosphorylase family. MtnN subfamily.

The catalysed reaction is S-adenosyl-L-homocysteine + H2O = S-(5-deoxy-D-ribos-5-yl)-L-homocysteine + adenine. It catalyses the reaction S-methyl-5'-thioadenosine + H2O = 5-(methylsulfanyl)-D-ribose + adenine. It carries out the reaction 5'-deoxyadenosine + H2O = 5-deoxy-D-ribose + adenine. It participates in amino-acid biosynthesis; L-methionine biosynthesis via salvage pathway; S-methyl-5-thio-alpha-D-ribose 1-phosphate from S-methyl-5'-thioadenosine (hydrolase route): step 1/2. Its function is as follows. Catalyzes the irreversible cleavage of the glycosidic bond in both 5'-methylthioadenosine (MTA) and S-adenosylhomocysteine (SAH/AdoHcy) to adenine and the corresponding thioribose, 5'-methylthioribose and S-ribosylhomocysteine, respectively. Also cleaves 5'-deoxyadenosine, a toxic by-product of radical S-adenosylmethionine (SAM) enzymes, into 5-deoxyribose and adenine. The polypeptide is 5'-methylthioadenosine/S-adenosylhomocysteine nucleosidase (Actinobacillus pleuropneumoniae serotype 3 (strain JL03)).